Reading from the N-terminus, the 461-residue chain is Fibrinogen C domain-containing protein 1 (461 aa).

The disordered stretch occupies residues 1 to 24 (MVNDRWKTMGGAAQLEDRPRDKPQ). Residues 1–33 (MVNDRWKTMGGAAQLEDRPRDKPQRPSCGYVLC) are Cytoplasmic-facing. The span at 15–24 (LEDRPRDKPQ) shows a compositional bias: basic and acidic residues. A helical; Signal-anchor for type II membrane protein transmembrane segment spans residues 34–54 (TVLLALAVLLAVAVTGAVLFL). Over 55–461 (NHAHAPGTAP…MKIRPVREDR (407 aa)) the chain is Extracellular. Residues 214 to 238 (GRPRNKADLQRAPARGTRPRGCATG) are disordered. The 224-residue stretch at 235–458 (CATGSRPRDC…FSEMKIRPVR (224 aa)) folds into the Fibrinogen C-terminal domain. Cysteines 244 and 273 form a disulfide. Asparagine 340 carries an N-linked (GlcNAc...) asparagine glycan. The Ca(2+) site is built by aspartate 393 and aspartate 395. Cysteine 401 and cysteine 414 are oxidised to a cystine.

In terms of assembly, homotetramer; disulfide-linked. In terms of tissue distribution, expressed in the small and large intestinal epithelial cells with a highly polarized localization to the apical surface corresponding to the brush border and in the ducts of the salivary gland.

The protein localises to the membrane. In terms of biological role, acetyl group-binding receptor which shows a high-affinity and calcium-dependent binding to acetylated structures such as chitin, some N-acetylated carbohydrates, and amino acids, but not to their non-acetylated counterparts. Can facilitate the endocytosis of acetylated components. In Homo sapiens (Human), this protein is Fibrinogen C domain-containing protein 1 (FIBCD1).